We begin with the raw amino-acid sequence, 208 residues long: uncharacterized protein (208 aa).

This is an uncharacterized protein from Schizosaccharomyces pombe (strain 972 / ATCC 24843) (Fission yeast).